The chain runs to 921 residues: Eukaryotic translation initiation factor 3 subunit A (921 aa).

Positions 319–493 (FKFYASQLVL…GVVSFMEDPF (175 aa)) constitute a PCI domain. Positions 497 to 524 (GGSTATNADDEQRNDDGYEETHVEEEPE) are disordered. Residues 506–517 (DEQRNDDGYEET) show a composition bias toward basic and acidic residues. Coiled-coil stretches lie at residues 562 to 647 (ARNE…NEKT) and 693 to 868 (ERMS…IKRN). Residues 818–865 (AAKEHDDRQRMLQDRLTKERKERERVNKEKDEAARKQREIEEAVERTI) are compositionally biased toward basic and acidic residues. The disordered stretch occupies residues 818–921 (AAKEHDDRQR…KMKLRRAGRA (104 aa)). Pro residues predominate over residues 873–890 (PAPPVRSAPPARAAPPPR). Basic and acidic residues predominate over residues 903 to 913 (PEKKLTYAEKM).

It belongs to the eIF-3 subunit A family. Component of the eukaryotic translation initiation factor 3 (eIF-3) complex.

It localises to the cytoplasm. Its function is as follows. RNA-binding component of the eukaryotic translation initiation factor 3 (eIF-3) complex, which is involved in protein synthesis of a specialized repertoire of mRNAs and, together with other initiation factors, stimulates binding of mRNA and methionyl-tRNAi to the 40S ribosome. The eIF-3 complex specifically targets and initiates translation of a subset of mRNAs involved in cell proliferation. This chain is Eukaryotic translation initiation factor 3 subunit A, found in Eremothecium gossypii (strain ATCC 10895 / CBS 109.51 / FGSC 9923 / NRRL Y-1056) (Yeast).